We begin with the raw amino-acid sequence, 447 residues long: Phosphoglucosamine mutase (447 aa).

Ser104 (phosphoserine intermediate) is an active-site residue. Mg(2+) contacts are provided by Ser104, Asp243, Asp245, and Asp247. Ser104 bears the Phosphoserine mark.

It belongs to the phosphohexose mutase family. Mg(2+) serves as cofactor. Activated by phosphorylation.

The catalysed reaction is alpha-D-glucosamine 1-phosphate = D-glucosamine 6-phosphate. Its function is as follows. Catalyzes the conversion of glucosamine-6-phosphate to glucosamine-1-phosphate. This is Phosphoglucosamine mutase from Corynebacterium jeikeium (strain K411).